Consider the following 125-residue polypeptide: Scinderin (125 aa).

Tyr-13 bears the Phosphotyrosine mark. A 1,2-diacyl-sn-glycero-3-phospho-(1D-myo-inositol-4,5-bisphosphate) contacts are provided by residues 23–30 (KGGLKYKA) and 49–57 (RLLHVKGRR). Residues 59–99 (VRATEVPLSWDSFNKGDCFIIDLGSEIYQWFGSSCNKYERL) form a Gelsolin-like 1 repeat.

This sequence belongs to the villin/gelsolin family.

It is found in the cytoplasm. The protein resides in the cytoskeleton. Its subcellular location is the cell projection. It localises to the podosome. In terms of biological role, ca(2+)-dependent actin filament-severing protein that has a regulatory function in exocytosis by affecting the organization of the microfilament network underneath the plasma membrane. In vitro, also has barbed end capping and nucleating activities in the presence of Ca(2+). Severing activity is inhibited by phosphatidylinositol 4,5-bis-phosphate (PIP2). Required for megakaryocyte differentiation, maturation, polyploidization and apoptosis with the release of platelet-like particles. Plays a role in osteoclastogenesis (OCG) and actin cytoskeletal organization in osteoclasts. Regulates chondrocyte proliferation and differentiation. Inhibits cell proliferation and tumorigenesis. Signaling is mediated by MAPK, p38 and JNK pathways. The polypeptide is Scinderin (SCIN) (Sus scrofa (Pig)).